A 170-amino-acid chain; its full sequence is Acetolactate synthase small subunit (170 aa).

Positions 9–83 (TLSVLVEDKP…NVIKIVEQEE (75 aa)) constitute an ACT domain. K46 is covalently cross-linked (Isoglutamyl lysine isopeptide (Lys-Gln) (interchain with Q-Cter in protein Pup)).

The protein belongs to the acetolactate synthase small subunit family. As to quaternary structure, dimer of large and small chains.

It catalyses the reaction 2 pyruvate + H(+) = (2S)-2-acetolactate + CO2. It functions in the pathway amino-acid biosynthesis; L-isoleucine biosynthesis; L-isoleucine from 2-oxobutanoate: step 1/4. Its pathway is amino-acid biosynthesis; L-valine biosynthesis; L-valine from pyruvate: step 1/4. The sequence is that of Acetolactate synthase small subunit (ilvH) from Mycolicibacterium smegmatis (strain ATCC 700084 / mc(2)155) (Mycobacterium smegmatis).